The chain runs to 169 residues: MTINIEYEAEEKLDLDYEKIITDVVNEAVDYEKCPYEAEVNVTIVDSESIHEINKEYRNIDSPTDVLSFPGVNYVTPSDFDAIEDELENNAEDYFNPDTGELLLGDIVLCVQKIKEQADKYGHSEKRELAFLTAHSMMHLFGYDHMTPEESAVMEAKQNEVLERLGITR.

Zn(2+)-binding residues include His135, His139, and His145.

The protein belongs to the endoribonuclease YbeY family. Zn(2+) is required as a cofactor.

The protein localises to the cytoplasm. Single strand-specific metallo-endoribonuclease involved in late-stage 70S ribosome quality control and in maturation of the 3' terminus of the 16S rRNA. This chain is Endoribonuclease YbeY, found in Lachnospira eligens (strain ATCC 27750 / DSM 3376 / VPI C15-48 / C15-B4) (Eubacterium eligens).